A 271-amino-acid polypeptide reads, in one-letter code: Type III pantothenate kinase (271 aa).

6–13 contacts ATP; the sequence is DVRNTHTV. 109–112 provides a ligand contact to substrate; it reads GADR. The active-site Proton acceptor is the D111. D131 serves as a coordination point for K(+). S134 is a binding site for ATP. Residue T186 coordinates substrate.

The protein belongs to the type III pantothenate kinase family. As to quaternary structure, homodimer. Requires NH4(+) as cofactor. K(+) serves as cofactor.

It is found in the cytoplasm. The catalysed reaction is (R)-pantothenate + ATP = (R)-4'-phosphopantothenate + ADP + H(+). Its pathway is cofactor biosynthesis; coenzyme A biosynthesis; CoA from (R)-pantothenate: step 1/5. In terms of biological role, catalyzes the phosphorylation of pantothenate (Pan), the first step in CoA biosynthesis. The sequence is that of Type III pantothenate kinase from Mycolicibacterium smegmatis (strain ATCC 700084 / mc(2)155) (Mycobacterium smegmatis).